The primary structure comprises 171 residues: Disulfide bond formation protein B (171 aa).

The Cytoplasmic portion of the chain corresponds to 1 to 8 (MRLSYRLV). A helical transmembrane segment spans residues 9–25 (SGLLVLASIVGMSFALY). Residues 26 to 43 (LEHVKGLEPCPLCIFQRV) are Periplasmic-facing. A disulfide bridge links Cys35 with Cys38. The helical transmembrane segment at 44 to 60 (GLMAMGFVALIAFLHNP) threads the bilayer. Residues 61–67 (VSNAIKR) lie on the Cytoplasmic side of the membrane. A helical membrane pass occupies residues 68 to 85 (FYAFLAGVAILWSVGVAG). Residues 86 to 142 (RHVWLQHLPPDQVPSCGPGLNYLIDALPMKTVLQEVLSGSGECAAIDWTFLGQSLPV) are Periplasmic-facing. The cysteines at positions 101 and 128 are disulfide-linked. The helical transmembrane segment at 143 to 161 (WSLAYFLLLLLVCLWQLFR) threads the bilayer. Over 162–171 (FYPVFKTAKK) the chain is Cytoplasmic.

This sequence belongs to the DsbB family.

It localises to the cell inner membrane. Its function is as follows. Required for disulfide bond formation in some periplasmic proteins. Acts by oxidizing the DsbA protein. In Acinetobacter baumannii (strain ATCC 17978 / DSM 105126 / CIP 53.77 / LMG 1025 / NCDC KC755 / 5377), this protein is Disulfide bond formation protein B.